A 185-amino-acid polypeptide reads, in one-letter code: F-box protein At1g61340 (185 aa).

Residues 78–126 enclose the F-box domain; it reads SRELEDLPLDILVRIICGVEHEDLKQLFHVSKTIREATMIAKQSHFAYS.

In Arabidopsis thaliana (Mouse-ear cress), this protein is F-box protein At1g61340.